The following is a 538-amino-acid chain: D-alanyl-D-alanine carboxypeptidase (538 aa).

The interval 1–21 is disordered; the sequence is MKQSSPEPLRPRRTGGRGGAR. Positions 1-49 are cleaved as a signal peptide; that stretch reads MKQSSPEPLRPRRTGGRGGARRAAALVTIPLLPMTLLGASPALADASGA. S98 (acyl-ester intermediate) is an active-site residue. K101 functions as the Proton acceptor in the catalytic mechanism. The segment at 146–319 is absent in class-A beta-lactamases; it reads TLSAEDLDAM…KGDVGLGGVP (174 aa). S347 is an active-site residue. K459 serves as a coordination point for substrate. The propeptide at 516–538 is removed in mature form; it reads GARMMRGPVQGSGELECSWVQAC.

Belongs to the peptidase S13 family.

Its subcellular location is the secreted. The enzyme catalyses Preferential cleavage: (Ac)2-L-Lys-D-Ala-|-D-Ala. Also transpeptidation of peptidyl-alanyl moieties that are N-acyl substituents of D-alanine.. It participates in cell wall biogenesis; peptidoglycan biosynthesis. With respect to regulation, inhibited by benzylpenicillin, cephaloridine, ampicillin and cetiofur. Its function is as follows. Removes C-terminal D-alanyl residues from sugar-peptide cell wall precursors. The polypeptide is D-alanyl-D-alanine carboxypeptidase (dac) (Actinomadura sp. (strain R39)).